Consider the following 139-residue polypeptide: Large ribosomal subunit protein uL16c (139 aa).

A disordered region spans residues 1–20; the sequence is MLSPKRTKYRKHHRGRMKGK.

The protein belongs to the universal ribosomal protein uL16 family. Part of the 50S ribosomal subunit.

It is found in the plastid. The protein resides in the chloroplast. This is Large ribosomal subunit protein uL16c from Pleurastrum terricola (Filamentous green alga).